Reading from the N-terminus, the 197-residue chain is Large ribosomal subunit protein uL10 (197 aa).

Positions 163-197 (GAPAAAEAPAAEESADSAAEAAAEAPAEAPAAEEN) are disordered.

Belongs to the universal ribosomal protein uL10 family. As to quaternary structure, part of the ribosomal stalk of the 50S ribosomal subunit. The N-terminus interacts with L11 and the large rRNA to form the base of the stalk. The C-terminus forms an elongated spine to which L12 dimers bind in a sequential fashion forming a multimeric L10(L12)X complex.

Its function is as follows. Forms part of the ribosomal stalk, playing a central role in the interaction of the ribosome with GTP-bound translation factors. This chain is Large ribosomal subunit protein uL10, found in Pseudarthrobacter chlorophenolicus (strain ATCC 700700 / DSM 12829 / CIP 107037 / JCM 12360 / KCTC 9906 / NCIMB 13794 / A6) (Arthrobacter chlorophenolicus).